The chain runs to 119 residues: MSNPNEMTDEEIAAAMEAFDLPQPEPPSTPQAATATDGTLAPSAPAEPSHSASPTLDALDESRRPKAKTVCERCPNSVWFASPAELKCYCRVMFLVTWSSKEPNQLTHCDGEFLGQEEG.

A disordered region spans residues 1–67 (MSNPNEMTDE…ALDESRRPKA (67 aa)). Residues 41-54 (APSAPAEPSHSASP) show a composition bias toward low complexity.

Functionally, the initiation process of transfer DNA synthesis requires the interaction of at least three plasmid-specific components (TraH, TraI, and TraJ) at the transfer origin resulting in the assembly of a specialized nucleoprotein complex - the relaxosome. This chain is Protein TraH (traH), found in Escherichia coli.